The following is a 102-amino-acid chain: Putative pterin-4-alpha-carbinolamine dehydratase (102 aa).

It belongs to the pterin-4-alpha-carbinolamine dehydratase family.

It carries out the reaction (4aS,6R)-4a-hydroxy-L-erythro-5,6,7,8-tetrahydrobiopterin = (6R)-L-erythro-6,7-dihydrobiopterin + H2O. The chain is Putative pterin-4-alpha-carbinolamine dehydratase from Psychromonas ingrahamii (strain DSM 17664 / CCUG 51855 / 37).